The sequence spans 809 residues: MASVPTHQSEKEKKNDELSTAILKDKVKPNRLIVDQSEQDDNSVIAVSQAKMDELGLFRGDAVILKGKKRKESVAIIVSDESCPNEKVRMNRVVRNNLRIRLGDVVSITPAPNLSYGTRIHVLPIDDTIEGLTGNLFDVFLKPYFLEAYRPLHKGDIFTVQAAMRTVEFKVVETEPAPACIVSPDTMIHYEGDPIKREEEEESMNDIGYDDLGGVRKQLAQIKEMVELPLRHPQLFKAIGIKPPRGILLFGPPGTGKTLIARAVANETGSFFFLINGPEVMSKMSGESESNLRKAFEECEKNQPAILFIDEIDAIAPKREKTNGEVERRIVSQLLTLMDGVKGRSNLVVIAATNRPNSIDGALRRFGRFDREIDIGIPDAVGRLEILRIHTKNMKLADDVDLEQIANECHGFVGADLASLCSEAALQQIREKMELIDLEDDQIDAEVLNSLAVTMENFRFAQGKSSPSALREAVVETPNTTWSDIGGLQNVKRELQELVQYPVEHPEKYLKFGMQPSRGVLFYGPPGCGKTLLAKAIANECQANFISIKGPELLTMWFGESEANVRDVFDKARAAAPCVLFFDELDSIAKARGGGAGGDGGGASDRVINQVLTEMDGMNAKKNVFIIGATNRPDIIDPAVLRPGRLDQLIYIPLPDEASRHQILKASLRKTPLSKDLDLTFLAKNTVGFSGADLTEICQRACKLAIRESIEKEIRIEKERQDRQARGEELMEDDAVDPVPEITRAHFEEAMKFARRSVTDNDIRKYEMFAQTLQQSRGFGNNFKFPGEQRGSDAPSAPVPAQDDDDLYN.

A disordered region spans residues 1–21 (MASVPTHQSEKEKKNDELSTA). Over residues 8 to 21 (QSEKEKKNDELSTA) the composition is skewed to basic and acidic residues. ATP-binding positions include 253–259 (PGTGKTL), Asn-354, His-390, and 527–532 (GCGKTL). The segment at 779 to 809 (FGNNFKFPGEQRGSDAPSAPVPAQDDDDLYN) is disordered. Positions 803 to 809 (DDDDLYN) are interaction with ufd-2.

It belongs to the AAA ATPase family. CDC48 subfamily. As to quaternary structure, homohexamer; oligomerization is ATP-independent. Forms a ring-shaped particle of 18.3 nm diameter, that displays 6-fold radial symmetry. Interacts with cdc-48.2 and thus may form heterohexamers. Forms a complex composed of cdc-48.1, him-6 and crp-1; within the complex, interacts with helicase him-6 and GTPase crp-1. Forms a complex composed of deubiquitinating enzyme atx-3, adapter ubxn-5 and cdc-48.1; within the complex, interacts (via N-terminus) with ubxn-5 and with atx-3. Forms a complex composed of deubiquitinating enzyme atx-3, E4 ubiquitin-protein ligase ufd-2 and cdc-48.1; within the complex, interacts with atx-3 and (via DDDLYN motif) with ufd-2. Interacts (via N-terminus) with atx-3 (via RRDR motif); the interaction is not required for atx-3 enzymatic activity. Forms a complex composed of cdc-48.1, myosin chaperone unc-45, ubiquitin-protein ligases ufd-2 and chn-1; within the complex, interacts (via DDDLYN motif) with ufd-2 and targets myosin chaperone unc-45 for proteasomal degradation. Forms a complex composed of ubxn-3, ufd-1, npl-4.1 and cdc-48.1; within the complex, interacts (via N-terminus) with ubxn-3 (via FPK motif) and with ufd-1. Forms a complex composed of ubxn-3, cdc-48.1 and/or cdc-48.2 and substrate cdt-1. Interacts (via N-terminus) with ubxn-1. Interacts (via N-terminus) with ubxn-2. Interacts (via N-terminus) with ubxn-4. Interacts with ubxn-6. Interacts with ufd-3. Does not interact with air-2. In terms of tissue distribution, expressed in germ cells and spermatheca. Expressed in body wall muscles.

It localises to the cytoplasm. The protein localises to the perinuclear region. It catalyses the reaction ATP + H2O = ADP + phosphate + H(+). With respect to regulation, the first ATP-binding region has low ATPase activity. The second ATP-binding region is responsible for ATPase activity. ATP binding to the first ATP-binding region induces intrinsic activity of the second ATP-binding region. While ATP binding to the first ATP-binding region appears to prevent ATP hydrolysis by the second ATP-binding region, ADP-binding to first region promotes the coordinate and cooperative ATPase cycle of the second ATP-binding region. ATP binding to the first ATP-binding region induces a conformational change, promoting the rotation of the first ATP-binding region relative to the second ATP-binding region in the hexamer. Inhibited by N-ethylmaleimide (NEM). ATP-dependent chaperone which probably uses the energy provided by ATP hydrolysis to generate mechanical force to unfold substrate proteins, disassemble protein complexes, and disaggregate protein aggregates. Can also prevent aggregation of unfolded proteins also in an ATP-independent manner. Targets polyubiquitinated proteins for proteasomal degradation by binding to 'Lys-48'-linked polyubiquitin chains. Involved in the cytoplasmic elimination of misfolded proteins exported from the ER. This pathway, known as ERAD, prevents the activation of the unfolded protein response (UPR) caused by the accumulation of misfolded proteins in the ER. In association with helicase him-6 and GTPase crp-1, regulates the unfolded protein response (UPR) following ER stress, probably independently of the ERAD pathway. Together with udf-2 and chn-1, regulates myosin assembly in body wall muscles by targeting myosin chaperone unc-45 for proteasomal degradation. Together with the ufd-1-npl-4 complex, controls the switch from spermatogenesis to oogenesis by regulating E3 ligase cul-2 complex-mediated tra-1 proteasomal degradation. During oocyte meiosis and together with cdc-48.2, required for chromosome condensation at the diakinesis phase in prophase I and for progression of metaphase I. During the first embryonic cell division, regulates DNA replication and thus chromosome segregation and decondensation, and nuclear envelope re-assembly. In S phase and in association with ufd-1, npl-4.1 and/or npl-4.2 and ubxn-3, ensures the degradation of DNA licensing factor cdt-1 after the initiation of DNA replication and thus the disassembly of the DNA replication CMG helicase complex by promoting the dissociation from chromatin of several of its components including cdc-45 and sld-5. Regulates ubxn-3 nuclear localization during S phase. During the first embryonic cell divisions and together with cdc-48.2, regulates the re-assembly of the nuclear envelope after mitosis possibly by inactivating kinase air-2, a component of the chromosomal passenger complex (CPC). However, in another study, cdc-48.1 does not appear to be implicated in the regulation of air-2. This chain is Transitional endoplasmic reticulum ATPase homolog 1, found in Caenorhabditis elegans.